The following is a 222-amino-acid chain: Putative O-methyltransferase MAP_2558 (222 aa).

S-adenosyl-L-methionine contacts are provided by residues V49, E71, 73–74 (GT), S79, D97, and I98. Position 145 (D145) interacts with substrate. D147 is an S-adenosyl-L-methionine binding site.

It belongs to the class I-like SAM-binding methyltransferase superfamily. Cation-dependent O-methyltransferase family.

The chain is Putative O-methyltransferase MAP_2558 from Mycolicibacterium paratuberculosis (strain ATCC BAA-968 / K-10) (Mycobacterium paratuberculosis).